A 1377-amino-acid polypeptide reads, in one-letter code: MKEIKDFEKIRIKIASPDQIRSWSYGEVKKSETINYRTLRPEKDGLFCERIFGTTKEWECYCGKFKSIRYKGIICDRCNVEVTHFKVRRERMGHIELSAPVAHIWYYKYIPSRIGLLLDITASNLNSILYYEKYIVIEPGDTDLKKMQLLNEDEYSEAKERYGMSFSASMGAEAIKTLLENLDLDELSSKLRLQMIDKDDKTDKKLLRRLEIIENFKISGNKPEWMIMDVLPVIPPEIRPMVQLDGGRFATSDLNDLYRRVINRNNRLRKLLLLNAPEIIVRNEKRMLQESVDSLFDNSHKRKVVKGTSNRPLKSLSDALKGKQGRFRQNLLGKRVDYSGRSVIVVGPELKLHQCGIPAKMALELFKPFVIRKLIESEAVFNIKRAKSLIEQEVDEVWQILDNVIKEHPVLLNRAPTLHRLGIQAFEPVLVEGKAIKLHPLVCHAYNADFDGDQMAVHVPLTPAAQAESWALMLSTNNLLNPANGHPIVFPSQDIVLGLYYLTMERKNVMGEGRKFSNFNHVLLAINNKSLDYNAQIYVKVGEEYIKTTAGRVVFSEALPGKISFVNKTLSDYELQTLISEVYVIYGSSIVIEMLDIIKELGFRYATKFGCTISMSDIIVPQEKKVYVEKANREIAKIQNDYTKGVITGEERYNNVVSVWSKTNEELTNKMMEILKKDRDGFNVIYMMADSGARGSRNQIRQLAGMRGLMAKTSGDIIELPIISNFKEGLSVIEFFISTNGARKGLADTALKTADAGYLTRRLVDIAQDVVVRIEDCGTINGIKVEALKNGEEIIEPLREKAVGSYSIERIKSPITGEIILDVNEEITEDKIKLLETVGIDKLVIRSVLTCEAEHGVCQKCYGRDFSNNKPVSIGEAVGIIAAQSIGQPGTQLTMRTFHIGGVAQAGSEDDKIALKNAFILNGLEGFNVQVDGGLLFTRKGVLRIINVIYEESIKKIKKLKVSDSQKVIKGMSLFIDKSGVEVLSSHIGYIKIKDNKLMIVSEEQEISLKVGTRLEINVGDYVEAGRVIGTFDPFAEPIIAEVKGKIKFKDIILGTTLKEEINLETGNIEKRITDQVFESLDPRILIINDRGVEIASYVLPGDAYLQVEDGQDIDIGDIIAKLSKGSEKTQDITGGLPRVNDLFETRIPKNLTEMAKVSGVVQFKAIQKGKRLINVIDEYGVEHKHYIPAGKHLLVRDGDVVRAGDMLCDGRINPHDVLEILGGISLQEFLLAEIQDVYRKQGVSINDKHIGVIIKQMMKKVKIVSVGDTNFVYNQKVDKHAFYEQNKRVIEQGGEPAVASPILIGITKASLNIDSFISAASFQETTKVLTDASIAGSIDDLRGLKENVVIGHLIPTGTGMNLYKRVKVRENSNSEV.

4 residues coordinate Zn(2+): cysteine 60, cysteine 62, cysteine 75, and cysteine 78. Mg(2+) contacts are provided by aspartate 449, aspartate 451, and aspartate 453. Residues cysteine 777, cysteine 851, cysteine 858, and cysteine 861 each coordinate Zn(2+).

It belongs to the RNA polymerase beta' chain family. The RNAP catalytic core consists of 2 alpha, 1 beta, 1 beta' and 1 omega subunit. When a sigma factor is associated with the core the holoenzyme is formed, which can initiate transcription. The cofactor is Mg(2+). It depends on Zn(2+) as a cofactor.

The catalysed reaction is RNA(n) + a ribonucleoside 5'-triphosphate = RNA(n+1) + diphosphate. Its function is as follows. DNA-dependent RNA polymerase catalyzes the transcription of DNA into RNA using the four ribonucleoside triphosphates as substrates. This is DNA-directed RNA polymerase subunit beta' from Borrelia recurrentis (strain A1).